A 399-amino-acid polypeptide reads, in one-letter code: Argininosuccinate synthase (399 aa).

Position 8–16 (8–16) interacts with ATP; that stretch reads AYSGGLDTT. L-citrulline is bound at residue Y87. An ATP-binding site is contributed by G117. 3 residues coordinate L-aspartate: T119, N123, and D124. Position 123 (N123) interacts with L-citrulline. L-citrulline-binding residues include R127, S175, E259, and Y271.

It belongs to the argininosuccinate synthase family. Type 1 subfamily. Homotetramer.

Its subcellular location is the cytoplasm. The catalysed reaction is L-citrulline + L-aspartate + ATP = 2-(N(omega)-L-arginino)succinate + AMP + diphosphate + H(+). It participates in amino-acid biosynthesis; L-arginine biosynthesis; L-arginine from L-ornithine and carbamoyl phosphate: step 2/3. In Corynebacterium urealyticum (strain ATCC 43042 / DSM 7109), this protein is Argininosuccinate synthase.